The sequence spans 161 residues: MNPRRKKRLGLILALFVGISATVGLMLYALNQNMDLFYTPTELVNGKPDGTKPEVGQRLRIGGMVVAGSVVRDNNSLEVSFKVADVGPQVTVIYDGILPDLFREGQGIVAQGVLVDATTIKAHEVLAKHDEEYMPPEVAEAMKKTHEPLQYTEQQKQGTGQ.

Residues 1 to 8 (MNPRRKKR) are Cytoplasmic-facing. Residues 9–29 (LGLILALFVGISATVGLMLYA) traverse the membrane as a helical; Signal-anchor for type II membrane protein segment. The Periplasmic portion of the chain corresponds to 30 to 161 (LNQNMDLFYT…TEQQKQGTGQ (132 aa)). Positions 129 and 133 each coordinate heme. Residues 142 to 161 (MKKTHEPLQYTEQQKQGTGQ) are disordered. A compositionally biased stretch (polar residues) spans 151-161 (YTEQQKQGTGQ).

This sequence belongs to the CcmE/CycJ family.

Its subcellular location is the cell inner membrane. Functionally, heme chaperone required for the biogenesis of c-type cytochromes. Transiently binds heme delivered by CcmC and transfers the heme to apo-cytochromes in a process facilitated by CcmF and CcmH. This chain is Cytochrome c-type biogenesis protein CcmE, found in Aliivibrio fischeri (strain ATCC 700601 / ES114) (Vibrio fischeri).